The chain runs to 175 residues: uncharacterized protein (175 aa).

The first 33 residues, 1-33 (MERLPYEIVSTIFRKAILHYVLIRGTTYPQSLA), serve as a signal peptide directing secretion.

This is an uncharacterized protein from Methanocaldococcus jannaschii (strain ATCC 43067 / DSM 2661 / JAL-1 / JCM 10045 / NBRC 100440) (Methanococcus jannaschii).